The sequence spans 719 residues: Pesticidal crystal protein Cry1Id (719 aa).

It belongs to the delta endotoxin family.

Functionally, promotes colloidosmotic lysis by binding to the midgut epithelial cells of many lepidopteran larvae. Active on Plutella xylostella and on Bombyx mori. This Bacillus thuringiensis protein is Pesticidal crystal protein Cry1Id (cry1Id).